We begin with the raw amino-acid sequence, 257 residues long: MLFLLSPAKKLDYDSPVHVETHTQPLFVDQAAALIKVLKTKSADEIAELMSLSPALAELNAGRYGAWKRSFTQANSRQAVLAFNGDVYEGLQADTLSARQLDWAQDHVVILSGLYGALRPLDLMQPYRLEMGTRLHTPKGKNLYEYWGSGIAEYLNERQAGAKAPVIVNLASEEYFKVVDLKTLKARVVQCVFQDWKNGAWKVISFHAKRARGLMARYAIAHKVARPEGLQGFDSEGYAYDAAASSADKLVFRRKQA.

Belongs to the UPF0246 family.

This Bordetella parapertussis (strain 12822 / ATCC BAA-587 / NCTC 13253) protein is UPF0246 protein BPP3440.